Consider the following 101-residue polypeptide: Small ribosomal subunit protein uS14A (101 aa).

The segment at 31–67 is disordered; the sequence is LRRPSSTEAERLAAQRELRRQPRDASPTRVRNRDQID. Positions 38-53 are enriched in basic and acidic residues; it reads EAERLAAQRELRRQPR.

This sequence belongs to the universal ribosomal protein uS14 family. As to quaternary structure, part of the 30S ribosomal subunit. Contacts proteins S3 and S10.

Its function is as follows. Binds 16S rRNA, required for the assembly of 30S particles and may also be responsible for determining the conformation of the 16S rRNA at the A site. The chain is Small ribosomal subunit protein uS14A from Streptomyces coelicolor (strain ATCC BAA-471 / A3(2) / M145).